The chain runs to 43 residues: uncharacterized protein (43 aa).

A helical membrane pass occupies residues 21–41 (SSFALIVVLFILLIIVGAAIF).

It belongs to the SscA family.

The protein resides in the membrane. This is an uncharacterized protein from Bacillus subtilis (strain 168).